The primary structure comprises 496 residues: Cytochrome f, chloroplastic (496 aa).

The transit peptide at 1–149 (MASLQTPVMV…VGAAAGSANA (149 aa)) directs the protein to the chloroplast. Residues Y150, C170, C173, and H174 each coordinate heme. A helical membrane pass occupies residues 462–481 (VQAFLFFSFTVLATQTLLVV).

This sequence belongs to the cytochrome f family. In terms of assembly, interacts with plastocyanin and Rieske iron-sulfur protein. Heme is required as a cofactor.

Its subcellular location is the plastid. It localises to the chloroplast thylakoid membrane. Translocates protons across the thylakoid membrane and transfers electrons from photosystem II to photosystem I. It receives electrons from the Rieske iron-sulfur protein and passes them to plastocyanin. This Euglena gracilis protein is Cytochrome f, chloroplastic (petA).